The sequence spans 130 residues: Anti-adapter protein IraD (130 aa).

The protein belongs to the GpW/Gp25 family. IraD subfamily. Interacts with RssB.

The protein localises to the cytoplasm. Functionally, inhibits RpoS proteolysis by regulating RssB activity, thereby increasing the stability of the sigma stress factor RpoS during oxidative stress. Its effect on RpoS stability is due to its interaction with RssB, which probably blocks the interaction of RssB with RpoS, and the consequent delivery of the RssB-RpoS complex to the ClpXP protein degradation pathway. This Escherichia coli O139:H28 (strain E24377A / ETEC) protein is Anti-adapter protein IraD.